A 441-amino-acid chain; its full sequence is Proline--tRNA ligase (441 aa).

This sequence belongs to the class-II aminoacyl-tRNA synthetase family. ProS type 2 subfamily. In terms of assembly, homodimer.

It is found in the cytoplasm. The catalysed reaction is tRNA(Pro) + L-proline + ATP = L-prolyl-tRNA(Pro) + AMP + diphosphate. Catalyzes the attachment of proline to tRNA(Pro) in a two-step reaction: proline is first activated by ATP to form Pro-AMP and then transferred to the acceptor end of tRNA(Pro). In Bartonella quintana (strain Toulouse) (Rochalimaea quintana), this protein is Proline--tRNA ligase.